The following is a 561-amino-acid chain: Phosphoinositide phospholipase C 1 (561 aa).

The EF-hand domain maps to 21-54; it reads EPPEEIKNLFHDYSQDDRMSADEMLRFVIQVQGE. Residues 105–249 enclose the PI-PLC X-box domain; it reads QDMNQPLSHY…LKNKILISTK (145 aa). Catalysis depends on residues His-120 and His-166. The segment covering 256-266 has biased composition (polar residues); sequence QTQISKGSTTD. The disordered stretch occupies residues 256-285; the sequence is QTQISKGSTTDESTRAKKISDAEEQVQEED. Residues 267–276 are compositionally biased toward basic and acidic residues; it reads ESTRAKKISD. In terms of domain architecture, PI-PLC Y-box spans 294–410; sequence RDLISIHAGN…GYVKKPDVLL (117 aa). Residues 414 to 541 form the C2 domain; sequence PEGEIFDPCS…PGIRAVRLHD (128 aa). 5 residues coordinate Ca(2+): Asp-452, Asp-458, Asp-510, Asp-512, and Asp-518.

Requires Ca(2+) as cofactor. Expressed in stems, leaves, roots, flowers and siliques. Predominant in the vascular tissues of roots and leaves.

The protein resides in the cell membrane. It catalyses the reaction a 1,2-diacyl-sn-glycero-3-phospho-(1D-myo-inositol-4,5-bisphosphate) + H2O = 1D-myo-inositol 1,4,5-trisphosphate + a 1,2-diacyl-sn-glycerol + H(+). The production of the second messenger molecules diacylglycerol (DAG) and inositol 1,4,5-trisphosphate (IP3) is mediated by activated phosphatidylinositol-specific phospholipase C enzymes. Required for secondary responses to abscisic acid signals. The sequence is that of Phosphoinositide phospholipase C 1 (PLC1) from Arabidopsis thaliana (Mouse-ear cress).